A 293-amino-acid chain; its full sequence is MADDAGAAGGPGGPGGPGMGGRGGFRGGFGSGVRGRGRGRGRGRGRGRGARGGKAEDKEWLPVTKLGRLVKDMKIKSLEEIYLFSLPIKESEIIDFFLGASLKDEVLKIMPVQKQTRAGQRTRFKAFVAIGDYNGHVGLGVKCSKEVATAIRGAIILAKLSIVPVRRGYWGNKIGKPHTVPCKVTGRCGSVLVRLIPAPRGTGIVSAPVPKKLLMMAGIDDCYTSARGCTATLGNFAKATFDAISKTYSYLTPDLWKETVFTKSPYQEFTDHLVKTHTRVSVQRTQAPAVATT.

Positions 1-56 (MADDAGAAGGPGGPGGPGMGGRGGFRGGFGSGVRGRGRGRGRGRGRGRGARGGKAE) are disordered. An N-acetylalanine modification is found at alanine 2. The span at 7 to 34 (AAGGPGGPGGPGMGGRGGFRGGFGSGVR) shows a compositional bias: gly residues. Residues 35–51 (GRGRGRGRGRGRGRGAR) show a composition bias toward basic residues. Glycyl lysine isopeptide (Lys-Gly) (interchain with G-Cter in ubiquitin) cross-links involve residues lysine 54 and lysine 58. Residues 102-165 (LKDEVLKIMP…ILAKLSIVPV (64 aa)) form the S5 DRBM domain. Threonine 252 is modified (phosphothreonine). Lysine 263 bears the N6-acetyllysine mark. A Phosphoserine modification is found at serine 264. Threonine 270 is subject to Phosphothreonine. Residue lysine 275 is modified to N6-acetyllysine; alternate. Residue lysine 275 forms a Glycyl lysine isopeptide (Lys-Gly) (interchain with G-Cter in SUMO1); alternate linkage. A Glycyl lysine isopeptide (Lys-Gly) (interchain with G-Cter in SUMO2); alternate cross-link involves residue lysine 275. Residue lysine 275 forms a Glycyl lysine isopeptide (Lys-Gly) (interchain with G-Cter in ubiquitin); alternate linkage. Residue serine 281 is modified to Phosphoserine.

It belongs to the universal ribosomal protein uS5 family. As to quaternary structure, component of the small ribosomal subunit. Interacts with zinc finger protein ZNF277 (via zinc-finger domains); the interaction is direct; the interaction is extra-ribosomal. Interaction with ZNF277 competes with the binding of RPS2 to protein arginine methyltransferase PRMT3. Post-translationally, citrullinated by PADI4 in the Arg/Gly-rich region. Asymmetric arginine dimethylation by PRMT3 occurs at multiple sites in the Arg/Gly-rich region. In terms of processing, monoubiquitinated at Lys-54 and Lys-58 by RNF10 when a ribosome has stalled during translation, leading to its degradation by the proteasome. Deubiquitinated at Lys-54 and Lys-58 by USP10, preventing degradation by the proteasome and promoting 40S ribosome subunit recycling following ribosome dissociation.

The protein resides in the cytoplasm. Its subcellular location is the nucleus. The protein localises to the nucleolus. Functionally, component of the ribosome, a large ribonucleoprotein complex responsible for the synthesis of proteins in the cell. The small ribosomal subunit (SSU) binds messenger RNAs (mRNAs) and translates the encoded message by selecting cognate aminoacyl-transfer RNA (tRNA) molecules. The large subunit (LSU) contains the ribosomal catalytic site termed the peptidyl transferase center (PTC), which catalyzes the formation of peptide bonds, thereby polymerizing the amino acids delivered by tRNAs into a polypeptide chain. The nascent polypeptides leave the ribosome through a tunnel in the LSU and interact with protein factors that function in enzymatic processing, targeting, and the membrane insertion of nascent chains at the exit of the ribosomal tunnel. Plays a role in the assembly and function of the 40S ribosomal subunit. Mutations in this protein affects the control of translational fidelity. Involved in nucleolar processing of pre-18S ribosomal RNA and ribosome assembly. This Bos taurus (Bovine) protein is Small ribosomal subunit protein uS5 (RPS2).